The sequence spans 46 residues: Large ribosomal subunit protein bL34c (46 aa).

Positions 1-46 (MSKRTLEGSHRKKVRKSGFLSRSQSPTGRRILKARRKKGRKMLVKY) are disordered. The segment covering 30–46 (RILKARRKKGRKMLVKY) has biased composition (basic residues).

The protein belongs to the bacterial ribosomal protein bL34 family.

It is found in the plastid. It localises to the cyanelle. This is Large ribosomal subunit protein bL34c (rpl34) from Cyanophora paradoxa.